The chain runs to 229 residues: Heptaprenylglyceryl phosphate synthase (229 aa).

Lys12 lines the sn-glycerol 1-phosphate pocket. Mg(2+) contacts are provided by Asp14 and Ser40. Sn-glycerol 1-phosphate contacts are provided by residues Tyr159–Gly164, Gly189, and Gly209–Asn210.

The protein belongs to the GGGP/HepGP synthase family. Group I subfamily. Homodimer. The cofactor is Mg(2+).

It carries out the reaction sn-glycerol 1-phosphate + all-trans-heptaprenyl diphosphate = 3-heptaprenyl-sn-glycero-1-phosphate + diphosphate. Its pathway is membrane lipid metabolism; glycerophospholipid metabolism. Functionally, prenyltransferase that catalyzes in vivo the transfer of the heptaprenyl moiety of heptaprenyl pyrophosphate (HepPP; 35 carbon atoms) to the C3 hydroxyl of sn-glycerol-1-phosphate (G1P), producing heptaprenylglyceryl phosphate (HepGP). This reaction is an ether-bond-formation step in the biosynthesis of archaea-type G1P-based membrane lipids found in Bacillales. In Bacillus cereus (strain ATCC 10987 / NRS 248), this protein is Heptaprenylglyceryl phosphate synthase.